Consider the following 383-residue polypeptide: Ribosomal RNA large subunit methyltransferase G (383 aa).

Belongs to the methyltransferase superfamily. RlmG family.

Its subcellular location is the cytoplasm. The enzyme catalyses guanosine(1835) in 23S rRNA + S-adenosyl-L-methionine = N(2)-methylguanosine(1835) in 23S rRNA + S-adenosyl-L-homocysteine + H(+). Functionally, specifically methylates the guanine in position 1835 (m2G1835) of 23S rRNA. The chain is Ribosomal RNA large subunit methyltransferase G from Shewanella amazonensis (strain ATCC BAA-1098 / SB2B).